The chain runs to 535 residues: Ribonuclease Y (535 aa).

The chain crosses the membrane as a helical span at residues 30-50 (IWALPALVIGLAIGAGIGILI). Residues 225–285 (TVSTVALPSE…VRREVARLAL (61 aa)) form the KH domain. An HD domain is found at 351 to 444 (VLQHSLECAL…VQAVDAISGG (94 aa)).

This sequence belongs to the RNase Y family.

The protein localises to the cell membrane. Its function is as follows. Endoribonuclease that initiates mRNA decay. In Roseiflexus sp. (strain RS-1), this protein is Ribonuclease Y.